We begin with the raw amino-acid sequence, 303 residues long: Elongation factor Ts (303 aa).

Residues 82 to 85 (TDFV) are involved in Mg(2+) ion dislocation from EF-Tu.

This sequence belongs to the EF-Ts family.

Its subcellular location is the cytoplasm. Functionally, associates with the EF-Tu.GDP complex and induces the exchange of GDP to GTP. It remains bound to the aminoacyl-tRNA.EF-Tu.GTP complex up to the GTP hydrolysis stage on the ribosome. This chain is Elongation factor Ts, found in Clostridioides difficile (strain 630) (Peptoclostridium difficile).